A 503-amino-acid polypeptide reads, in one-letter code: MEEFQGYLELYRSQQHDFLYPLIFREYIYALAHDRGLNRSVLLDNVGYDKKSSLLIIKRLISRMYQQNHFIISLNDSNQNKFLGYNKNLYSQMISEGFAVIVEIPFSLRLVSSLEETETVKSYNLRSIHSIFPFFEDKFPHLNYASDVLIPYPIHLEILVQTLRYCVKDPSSLHLLRLFLHEYYNWNTLITPKKSIFAKSNQRLFLLLYNSYVCEYESILLFLRNQSNHLRLTSSGILFERIRFYEKIKYPVEEVFANDFPATLWFFKDPFIQYVRYQGKSILASKDTPLLMNKWKYYLVHFWQCHFYVWSQPGRIHINQLSKHSFDFLGYLSSIRPNISVVRSQLLENSFLMDNAMKKLDTLFPIIPMIGSLAKVKFCNTSGHPISKSSWADSSDSDIIDRFVRIGGNLSHYYSGSSKKKSLYRIKYILRLSCVKTLARKHKSTVRTFLKRLGPKLLDEFFTEEEQIFSLLFPRTSSTLKRFYRGRIWYLDILCINDLVNHE.

Belongs to the intron maturase 2 family. MatK subfamily.

The protein resides in the plastid. It is found in the chloroplast. In terms of biological role, usually encoded in the trnK tRNA gene intron. Probably assists in splicing its own and other chloroplast group II introns. The protein is Maturase K of Rosa gigantea (Giant tea rose).